A 141-amino-acid polypeptide reads, in one-letter code: Small ribosomal subunit protein uS8c (141 aa).

This sequence belongs to the universal ribosomal protein uS8 family. Part of the 30S ribosomal subunit.

The protein localises to the plastid. Its subcellular location is the chloroplast. One of the primary rRNA binding proteins, it binds directly to 16S rRNA central domain where it helps coordinate assembly of the platform of the 30S subunit. The chain is Small ribosomal subunit protein uS8c (rps8) from Chlamydomonas reinhardtii (Chlamydomonas smithii).